The following is a 385-amino-acid chain: Zinc finger protein B385R (385 aa).

2 consecutive C2H2-type zinc fingers follow at residues 166-190 (LQCPNCGCIQELMGTIFDETHFYNH) and 168-190 (CPNCGCIQELMGTIFDETHFYNH).

It belongs to the asfivirus B385R family.

This African swine fever virus (isolate Tick/South Africa/Pretoriuskop Pr4/1996) (ASFV) protein is Zinc finger protein B385R.